The sequence spans 1465 residues: DNA polymerase III PolC-type (1465 aa).

The Exonuclease domain maps to 427–583 (YVVFDVETTG…YDAEATGRLL (157 aa)).

The protein belongs to the DNA polymerase type-C family. PolC subfamily.

Its subcellular location is the cytoplasm. It catalyses the reaction DNA(n) + a 2'-deoxyribonucleoside 5'-triphosphate = DNA(n+1) + diphosphate. In terms of biological role, required for replicative DNA synthesis. This DNA polymerase also exhibits 3' to 5' exonuclease activity. The protein is DNA polymerase III PolC-type of Streptococcus pyogenes serotype M6 (strain ATCC BAA-946 / MGAS10394).